The following is a 488-amino-acid chain: Tyrosine-protein kinase Srms (488 aa).

An SH3 domain is found at 51 to 112 (PFPQLFLALY…PITHVAKASP (62 aa)). An SH2 domain is found at 120-212 (WYFSGVSRTQ…LIQNPLLQPC (93 aa)). Residues 230–488 (FALGRKLGEG…KLHAIHRCHP (259 aa)) form the Protein kinase domain. ATP is bound by residues 236–244 (LGEGYFGEV) and Lys-258. Residue Asp-350 is the Proton acceptor of the active site. At Tyr-380 the chain carries Phosphotyrosine; by autocatalysis.

It belongs to the protein kinase superfamily. Tyr protein kinase family. SRC subfamily. Interacts (via the SH2 and SH3 domains) with DOK1. Interacts with KHDRBS1/SAM68 and VIM. Highly expressed in most breast cancers (at protein level).

The protein localises to the cytoplasm. The catalysed reaction is L-tyrosyl-[protein] + ATP = O-phospho-L-tyrosyl-[protein] + ADP + H(+). Functionally, non-receptor tyrosine-protein kinase which phosphorylates DOK1 on tyrosine residues. Also phosphorylates KHDRBS1/SAM68 and VIM on tyrosine residues. Phosphorylation of KHDRBS1 is EGF-dependent. Phosphorylates OTUB1, promoting deubiquitination of RPTOR. The polypeptide is Tyrosine-protein kinase Srms (SRMS) (Homo sapiens (Human)).